The sequence spans 345 residues: Biotin synthase (345 aa).

The 219-residue stretch at 38–256 folds into the Radical SAM core domain; the sequence is RQVQVSTLLS…IAVARIMMPA (219 aa). 3 residues coordinate [4Fe-4S] cluster: cysteine 53, cysteine 57, and cysteine 60. [2Fe-2S] cluster contacts are provided by cysteine 97, cysteine 128, cysteine 188, and arginine 260.

This sequence belongs to the radical SAM superfamily. Biotin synthase family. Homodimer. [4Fe-4S] cluster is required as a cofactor. It depends on [2Fe-2S] cluster as a cofactor.

The catalysed reaction is (4R,5S)-dethiobiotin + (sulfur carrier)-SH + 2 reduced [2Fe-2S]-[ferredoxin] + 2 S-adenosyl-L-methionine = (sulfur carrier)-H + biotin + 2 5'-deoxyadenosine + 2 L-methionine + 2 oxidized [2Fe-2S]-[ferredoxin]. It functions in the pathway cofactor biosynthesis; biotin biosynthesis; biotin from 7,8-diaminononanoate: step 2/2. Functionally, catalyzes the conversion of dethiobiotin (DTB) to biotin by the insertion of a sulfur atom into dethiobiotin via a radical-based mechanism. This Serratia proteamaculans (strain 568) protein is Biotin synthase.